The chain runs to 146 residues: Angiogenin (146 aa).

A signal peptide spans 1–24; sequence MVMGLHLLLLVFILGLGLTPPTLA. Gln25 carries the post-translational modification Pyrrolidone carboxylic acid. His37 functions as the Proton acceptor in the catalytic mechanism. 3 cysteine pairs are disulfide-bonded: Cys50–Cys105, Cys63–Cys116, and Cys81–Cys131. Residues 55-59 carry the Nucleolar localization signal motif; the sequence is RLRNM. TRNA is bound at residue Cys105. The active-site Proton donor is the His138.

This sequence belongs to the pancreatic ribonuclease family. In terms of assembly, homodimer. Interacts with RNH1; inhibiting ANG ribonuclease activity. Interacts with PCNA.

The protein resides in the secreted. Its subcellular location is the nucleus. The protein localises to the nucleolus. It localises to the cytoplasm. It is found in the stress granule. Has weak tRNA ribonuclease activity by itself due to partial autoinhibition by its C-terminus, which folds into a short alpha-helix that partially occludes the substrate-binding site. In absence of stress, the ribonuclease activity is inhibited by RNH1 in the cytoplasm. In response to stress, dissociates from RNH1 in the cytoplasm and associates with cytoplasmic ribosomes with vacant A-sites: ribosomes directly activate the tRNA ribonuclease activity of ANG by refolding the C-terminal alpha-helix. In response to stress, the angiogenic activity of ANG is inhibited by RNH1 in the nucleus. Functionally, secreted ribonuclease that can either promote or restrict cell proliferation of target cells, depending on the context. Endocytosed in target cells via its receptor PLXNB2 and translocates to the cytoplasm or nucleus. Under stress conditions, localizes to the cytoplasm and promotes the assembly of stress granules (SGs): specifically cleaves a subset of tRNAs within anticodon loops to produce tRNA-derived stress-induced fragments (tiRNAs), resulting in translation repression and inhibition of cell proliferation. tiRNas also prevent formation of apoptosome, thereby promoting cell survival. Preferentially cleaves RNAs between a pyrimidine and an adenosine residue, suggesting that it cleaves the anticodon loop of tRNA(Ala) (32-UUAGCAU-38) after positions 33 and 36. Cleaves a subset of tRNAs, including tRNA(Ala), tRNA(Glu), tRNA(Gly), tRNA(Lys), tRNA(Val), tRNA(His), tRNA(Asp) and tRNA(Sec). Under growth conditions and in differentiated cells, translocates to the nucleus and stimulates ribosomal RNA (rRNA) transcription, including that containing the initiation site sequences of 45S rRNA, thereby promoting cell growth and proliferation. Angiogenin induces vascularization of normal and malignant tissues via its ability to promote rRNA transcription. Involved in hematopoietic stem and progenitor cell (HSPC) growth and survival by promoting rRNA transcription in growth conditions and inhibiting translation in response to stress, respectively. Mediates the crosstalk between myeloid and intestinal epithelial cells to protect the intestinal epithelial barrier integrity: secreted by myeloid cells and promotes intestinal epithelial cells proliferation and survival. Also mediates osteoclast-endothelial cell crosstalk in growing bone: produced by osteoclasts and protects the neighboring vascular cells against senescence by promoting rRNA transcription. The sequence is that of Angiogenin (ANG) from Aotus trivirgatus (Three-striped night monkey).